A 351-amino-acid polypeptide reads, in one-letter code: Molybdate-binding protein MolA (351 aa).

The signal sequence occupies residues 1 to 21 (MKLKSLLIACLLSSLSFSALA). A Fe/B12 periplasmic-binding domain is found at 41–322 (RAVVLQHQTL…WLAKALYPQR (282 aa)). Residues 47 to 48 (HQ), Tyr217, Arg264, and 300 to 301 (GY) each bind molybdate.

It belongs to the bacterial solute-binding protein 8 family. The complex is composed of two ATP-binding proteins (MolC), two transmembrane proteins (MolB) and a solute-binding protein (MolA).

The protein localises to the periplasm. Its activity is regulated as follows. The MolBCA complex shows a decrease in affinity in the presence of increasing concentrations of substrate and nucleotide. Part of the ABC transporter complex MolBCA involved in molybdate import. Functions as a low-affinity molybdate transporter. Binds to both molybdate and tungstate, but not to sulfate or phosphate. This is Molybdate-binding protein MolA from Haemophilus influenzae (strain ATCC 51907 / DSM 11121 / KW20 / Rd).